We begin with the raw amino-acid sequence, 399 residues long: Serine/threonine-protein kinase PKZ1 (399 aa).

The segment at 30–50 (PMQCAYQTQSHSNPEGAKRGR) is disordered. One can recognise a Protein kinase domain in the interval 92-371 (WQLFDQIGAG…ADQMLQHPWM (280 aa)). ATP is bound by residues 98 to 106 (IGAGAFGVV) and lysine 121. The active-site Proton acceptor is aspartate 219.

It belongs to the protein kinase superfamily. CAMK Ser/Thr protein kinase family.

The enzyme catalyses L-seryl-[protein] + ATP = O-phospho-L-seryl-[protein] + ADP + H(+). It carries out the reaction L-threonyl-[protein] + ATP = O-phospho-L-threonyl-[protein] + ADP + H(+). Functionally, may regulate an early stage of the zoospore pathway. This is Serine/threonine-protein kinase PKZ1 from Phytophthora infestans (strain T30-4) (Potato late blight agent).